A 301-amino-acid chain; its full sequence is Probable cyclic nucleotide phosphodiesterase RER_40650 (301 aa).

Fe cation is bound by residues aspartate 20, histidine 22, aspartate 61, asparagine 95, histidine 167, histidine 205, and histidine 207. AMP contacts are provided by residues histidine 22, aspartate 61, and 95 to 96 (NH). Histidine 207 serves as a coordination point for AMP.

It belongs to the cyclic nucleotide phosphodiesterase class-III family. It depends on Fe(2+) as a cofactor.

This is Probable cyclic nucleotide phosphodiesterase RER_40650 from Rhodococcus erythropolis (strain PR4 / NBRC 100887).